We begin with the raw amino-acid sequence, 150 residues long: D-aminoacyl-tRNA deacylase (150 aa).

The short motif at 138 to 139 is the Gly-cisPro motif, important for rejection of L-amino acids element; it reads GP.

This sequence belongs to the DTD family. Homodimer.

The protein resides in the cytoplasm. The enzyme catalyses glycyl-tRNA(Ala) + H2O = tRNA(Ala) + glycine + H(+). It catalyses the reaction a D-aminoacyl-tRNA + H2O = a tRNA + a D-alpha-amino acid + H(+). Its function is as follows. An aminoacyl-tRNA editing enzyme that deacylates mischarged D-aminoacyl-tRNAs. Also deacylates mischarged glycyl-tRNA(Ala), protecting cells against glycine mischarging by AlaRS. Acts via tRNA-based rather than protein-based catalysis; rejects L-amino acids rather than detecting D-amino acids in the active site. By recycling D-aminoacyl-tRNA to D-amino acids and free tRNA molecules, this enzyme counteracts the toxicity associated with the formation of D-aminoacyl-tRNA entities in vivo and helps enforce protein L-homochirality. In Chlorobium limicola (strain DSM 245 / NBRC 103803 / 6330), this protein is D-aminoacyl-tRNA deacylase.